Consider the following 301-residue polypeptide: tRNA dimethylallyltransferase (301 aa).

9–16 (GPTASGKS) contributes to the ATP binding site. Residue 11-16 (TASGKS) coordinates substrate. Residues 34–37 (DSMQ) are interaction with substrate tRNA.

The protein belongs to the IPP transferase family. As to quaternary structure, monomer. Mg(2+) serves as cofactor.

The catalysed reaction is adenosine(37) in tRNA + dimethylallyl diphosphate = N(6)-dimethylallyladenosine(37) in tRNA + diphosphate. Catalyzes the transfer of a dimethylallyl group onto the adenine at position 37 in tRNAs that read codons beginning with uridine, leading to the formation of N6-(dimethylallyl)adenosine (i(6)A). The protein is tRNA dimethylallyltransferase of Corynebacterium glutamicum (strain ATCC 13032 / DSM 20300 / JCM 1318 / BCRC 11384 / CCUG 27702 / LMG 3730 / NBRC 12168 / NCIMB 10025 / NRRL B-2784 / 534).